Consider the following 648-residue polypeptide: Replication restart protein PriA (648 aa).

Residues 131–297 (TILNESNKPT…KTHKYQLVTL (167 aa)) form the Helicase ATP-binding domain. 144–151 (GVTGSGKT) contributes to the ATP binding site. The short motif at 240–243 (DEEH) is the DEAH box element. Cys358, Cys361, Cys367, Cys370, Cys385, Cys388, Cys398, and Cys401 together coordinate Zn(2+). Residues 375 to 548 (VLHKATKKLE…RFFTNELEIR (174 aa)) form the Helicase C-terminal domain.

It belongs to the helicase family. PriA subfamily. As to quaternary structure, component of the replication restart primosome. It depends on Zn(2+) as a cofactor.

It carries out the reaction Couples ATP hydrolysis with the unwinding of duplex DNA by translocating in the 3'-5' direction.. The enzyme catalyses ATP + H2O = ADP + phosphate + H(+). Its function is as follows. Initiates the restart of stalled replication forks, which reloads the replicative helicase on sites other than the origin of replication. Recognizes and binds to abandoned replication forks and remodels them to uncover a helicase loading site. Promotes assembly of the primosome at these replication forks. The protein is Replication restart protein PriA of Rickettsia prowazekii (strain Madrid E).